Reading from the N-terminus, the 103-residue chain is Protein translation factor SUI1 homolog (103 aa).

This sequence belongs to the SUI1 family.

The protein is Protein translation factor SUI1 homolog of Methanocaldococcus jannaschii (strain ATCC 43067 / DSM 2661 / JAL-1 / JCM 10045 / NBRC 100440) (Methanococcus jannaschii).